Consider the following 184-residue polypeptide: UPF0301 protein Sden_2674 (184 aa).

It belongs to the UPF0301 (AlgH) family.

This is UPF0301 protein Sden_2674 from Shewanella denitrificans (strain OS217 / ATCC BAA-1090 / DSM 15013).